A 556-amino-acid polypeptide reads, in one-letter code: Formate--tetrahydrofolate ligase (556 aa).

65–72 serves as a coordination point for ATP; sequence TSAGEGKT.

Belongs to the formate--tetrahydrofolate ligase family.

The enzyme catalyses (6S)-5,6,7,8-tetrahydrofolate + formate + ATP = (6R)-10-formyltetrahydrofolate + ADP + phosphate. It participates in one-carbon metabolism; tetrahydrofolate interconversion. This chain is Formate--tetrahydrofolate ligase, found in Kosmotoga olearia (strain ATCC BAA-1733 / DSM 21960 / TBF 19.5.1).